Consider the following 78-residue polypeptide: Large ribosomal subunit protein bL28 (78 aa).

The disordered stretch occupies residues 1-21 (MSRVCQVTGKRPVSGNNRSHA).

The protein belongs to the bacterial ribosomal protein bL28 family.

This is Large ribosomal subunit protein bL28 from Yersinia enterocolitica serotype O:8 / biotype 1B (strain NCTC 13174 / 8081).